Here is a 528-residue protein sequence, read N- to C-terminus: Calcium-dependent protein kinase 4 (528 aa).

Positions 1 to 36 (MGQEVSSVNNTKNEHHKTNKKSLKGGNERHEMKESS) are disordered. Gly2 carries N-myristoyl glycine lipidation. Residues 14 to 23 (EHHKTNKKSL) show a composition bias toward basic residues. The Protein kinase domain occupies 71-329 (KGIKILGKGS…RDALEHEWIK (259 aa)). ATP-binding positions include 76-84 (LGKGSFGEV) and Lys99. The Proton acceptor role is filled by Asp193. A J domain autoinhibitory motif motif is present at residues 350-358 (NIRQFQSTQ). The interval 350–386 (NIRQFQSTQKLAQAALLYMGSKLTTIDETKELTKIFK) is j domain. Positions 359 to 368 (KLAQAALLYM) match the J domain EF-hand interaction motif motif. EF-hand domains lie at 376–411 (DETKELTKIFKKMDKNGDGQLDRNELIIGYKELLKL), 427–458 (EVDQILNSIDLDQNGYIEYSEFLTVSIDRKLL), 459–494 (LSTERLEKAFKLFDKDGSGKISANELAQLFGLSDVS), and 496–528 (ECWKTVLKEVDQNNDGEIDFKEFRDMLVKLCNY). Positions 389, 391, 393, 395, 400, 436, 438, 440, 442, 447, 472, 474, 476, 478, 483, 506, 508, 510, 512, and 517 each coordinate Ca(2+).

The protein belongs to the protein kinase superfamily. Ser/Thr protein kinase family. CDPK subfamily. As to quaternary structure, may interact with the pre-replication MCM complex prior male gametogenesis activation. Requires Mg(2+) as cofactor. Myristoylated; myristoylation may target it to different subcellular compartments. During male gametogenesis, myristoylation is required to initiate DNA replication but not for mitotic spindle assembly or axoneme activation. In terms of processing, not palmitoylated. Post-translationally, may be autophosphorylated on Thr-234 in vitro.

It is found in the cytoplasm. Its subcellular location is the cell membrane. It carries out the reaction L-seryl-[protein] + ATP = O-phospho-L-seryl-[protein] + ADP + H(+). The catalysed reaction is L-threonyl-[protein] + ATP = O-phospho-L-threonyl-[protein] + ADP + H(+). Its activity is regulated as follows. Activated by calcium. Upon calcium binding to the EF-hand domains, the C-terminus of the junction domain (J domain) undergoes a conformational change which results in the dissociation of the pseudo-substrate inhibitory motif from the catalytic domain. This, in turn, may facilitate the autophosphorylation of the activation loop at Thr-234, which leads to the kinase activation. Intracellular calcium increase is triggered by xanthurenic acid (XA), a small mosquito molecule that induces the differentiation of specialized transmission stages, the gametocytes, into male and female gametes. Activated by a decrease in temperature (20 degrees Celsius) and an increase in pH (7.6) occurring when the parasite is ingested by in the mosquito. Functionally, calcium-dependent protein kinase which acts as a sensor and effector of intracellular Ca(2+) levels probably in part downstream of cGMP-activated PKG kinase. Plays a central role in the host erythrocytes and hepatocytes infection cycles, sexual reproduction and mosquito transmission of the parasite. During the liver stage, involved in sporozoite motility and thus in sporozoite invasion of host hepatocytes, probably together with CDPK1 and CDPK5. Involved in merosome egress from host hepatocytes, probably together with CDPK5. During the asexual blood stage, involved in merozoite invasion of host erythrocytes and motility by stabilizing the inner membrane complex, a structure below the plasma membrane which acts as an anchor for the glidosome, an acto-myosin motor. Required for cell cycle progression in the male gametocyte. During male gametogenesis in the mosquito gut, required to initiate the first round of DNA replication, probably by facilitating the assembly of the pre-replicative MCM complex, to assemble the first mitotic spindle and, at the end of gametogenesis, to initiate axoneme motility, cytokinesis and subsequent exflagellation. For each of these steps, may phosphorylate SOC1, SOC2 and SOC3, respectively. Together with CDPK1, regulates ookinete gliding in the mosquito host midgut. This is Calcium-dependent protein kinase 4 from Plasmodium falciparum (isolate 3D7).